A 479-amino-acid polypeptide reads, in one-letter code: Anaerobic nitric oxide reductase flavorubredoxin (479 aa).

The interval 30–210 is zinc metallo-hydrolase; it reads LRGSSYNSYL…PFSRLVTPKI (181 aa). Fe cation is bound by residues His-79, Glu-81, Asp-83, His-147, Asp-166, and His-227. The Flavodoxin-like domain occupies 254–393; sequence ITIFYDTMSN…LCRQHGRDIA (140 aa). Residues 260-264 and 342-369 each bind FMN; these read TMSNN and AFGS…EMSL. One can recognise a Rubredoxin-like domain in the interval 423–474; that stretch reads GPKMQCSVCQWIYDPALGEPLQDVAPGTPWSDVPDNFLCPECSLGKDVFDVL. Positions 428, 431, 461, and 464 each coordinate Fe cation.

It in the N-terminal section; belongs to the zinc metallo-hydrolase group 3 family. In terms of assembly, homotetramer. Requires Fe cation as cofactor. The cofactor is FMN.

The protein resides in the cytoplasm. It functions in the pathway nitrogen metabolism; nitric oxide reduction. Its function is as follows. Anaerobic nitric oxide reductase; uses NADH to detoxify nitric oxide (NO), protecting several 4Fe-4S NO-sensitive enzymes. Has at least 2 reductase partners, only one of which (NorW, flavorubredoxin reductase) has been identified. NO probably binds to the di-iron center; electrons enter from the NorW at rubredoxin and are transferred sequentially to the FMN center and the di-iron center. Also able to function as an aerobic oxygen reductase. This chain is Anaerobic nitric oxide reductase flavorubredoxin, found in Salmonella typhi.